A 329-amino-acid chain; its full sequence is uncharacterized protein (329 aa).

Transmembrane regions (helical) follow at residues Asn-5–Val-24, Ile-34–Phe-56, Phe-92–Gly-114, Ile-124–Tyr-146, Ser-159–Leu-181, Thr-196–Leu-218, Phe-231–Tyr-253, Leu-263–Gly-285, and Phe-306–Thr-328.

It localises to the cell membrane. This is an uncharacterized protein from Archaeoglobus fulgidus (strain ATCC 49558 / DSM 4304 / JCM 9628 / NBRC 100126 / VC-16).